The following is a 237-amino-acid chain: Zinc finger protein 22 (237 aa).

Residues 1-33 form a disordered region; that stretch reads MRLGKPKGGISRSASQGKTYESKRKTARQRQKW. N6-acetyllysine occurs at positions 18 and 23. C2H2-type zinc fingers lie at residues 55–82, 83–110, 111–138, 139–166, and 167–194; these read YKCT…GKKS, HKCA…GEKP, YKCD…GEKP, YCCD…GEKP, and YQCE…EKKS. Basic residues predominate over residues 188–217; the sequence is VHKEKKSHKRGKNARAKTHPVSWKRGKGRK. The segment at 188 to 218 is disordered; that stretch reads VHKEKKSHKRGKNARAKTHPVSWKRGKGRKA.

It belongs to the krueppel C2H2-type zinc-finger protein family. Highly expressed in the ameloblast layer of mandibular incisors, moderately expressed in submandibular gland, calvaria, kidney and lung, and expressed at low levels in brain and thymus.

It is found in the nucleus. Binds DNA through the consensus sequence 5'-CAATG-3'. May be involved in transcriptional regulation and may play a role in tooth formation. This is Zinc finger protein 22 (Znf22) from Rattus norvegicus (Rat).